The following is a 200-amino-acid chain: MRTSHMLEHLMEALRCLPGVGPKSAQRMAFHLLQRDRKGGLQLAEALSQAMVEIGHCQECRTFTEQDVCHICSNPKRKENGQLCVVESPADIAALEATGQFSGRYFVLMGHLSPLDGIGPSDIGLDTLDYRLQRGDISEVILATNPTVEGEATAQYIAELCREHQVTASRIAHGVPVGGELELVDGTTLSHSLLGRHKLF.

The C4-type zinc finger occupies 57–72 (CQECRTFTEQDVCHIC). In terms of domain architecture, Toprim spans 81–176 (GQLCVVESPA…TASRIAHGVP (96 aa)).

Belongs to the RecR family.

In terms of biological role, may play a role in DNA repair. It seems to be involved in an RecBC-independent recombinational process of DNA repair. It may act with RecF and RecO. This Vibrio cholerae serotype O1 (strain ATCC 39541 / Classical Ogawa 395 / O395) protein is Recombination protein RecR.